Consider the following 240-residue polypeptide: tRNA (guanine-N(1)-)-methyltransferase (240 aa).

S-adenosyl-L-methionine is bound by residues Gly-110 and 129–134; that span reads LGDFVL.

Belongs to the RNA methyltransferase TrmD family. In terms of assembly, homodimer.

Its subcellular location is the cytoplasm. It carries out the reaction guanosine(37) in tRNA + S-adenosyl-L-methionine = N(1)-methylguanosine(37) in tRNA + S-adenosyl-L-homocysteine + H(+). In terms of biological role, specifically methylates guanosine-37 in various tRNAs. This is tRNA (guanine-N(1)-)-methyltransferase from Clostridium botulinum (strain ATCC 19397 / Type A).